Reading from the N-terminus, the 777-residue chain is Myotubularin-related protein 10 (777 aa).

The tract at residues 196 to 217 is disordered; it reads PSGDGGGGGGGGNGAGGGSSQK. Over residues 197–214 the composition is skewed to gly residues; that stretch reads SGDGGGGGGGGNGAGGGS. Positions 221–661 constitute a Myotubularin phosphatase domain; that stretch reads FETYSDWDRE…THIKLWKLCY (441 aa). 2 positions are modified to phosphoserine: Ser607 and Ser751.

The protein belongs to the protein-tyrosine phosphatase family. Non-receptor class myotubularin subfamily.

This chain is Myotubularin-related protein 10 (MTMR10), found in Homo sapiens (Human).